We begin with the raw amino-acid sequence, 839 residues long: Translation initiation factor IF-2 (839 aa).

Basic and acidic residues-rich tracts occupy residues 1–12 (MSDNEIKNETPK) and 57–67 (AEAKAQEKQAA). 2 disordered regions span residues 1-21 (MSDN…RRTK) and 57-244 (AEAK…GASL). The segment covering 68-90 (EKAAQAQTEAKAQTEQACTTKKT) has biased composition (low complexity). Composition is skewed to basic and acidic residues over residues 104–167 (PKTE…REET), 185–199 (READ…EGNR), and 212–233 (GGRE…DIKG). A tr-type G domain is found at 338-508 (TRAPVVTIMG…ILQSEVLELT (171 aa)). Positions 347–354 (GHVDHGKT) are G1. 347 to 354 (GHVDHGKT) contributes to the GTP binding site. Residues 372–376 (GITQH) are G2. Positions 394-397 (DTPG) are G3. Residues 394–398 (DTPGH) and 448–451 (NKID) each bind GTP. The tract at residues 448–451 (NKID) is G4. The segment at 484–486 (SAK) is G5.

It belongs to the TRAFAC class translation factor GTPase superfamily. Classic translation factor GTPase family. IF-2 subfamily.

It localises to the cytoplasm. Its function is as follows. One of the essential components for the initiation of protein synthesis. Protects formylmethionyl-tRNA from spontaneous hydrolysis and promotes its binding to the 30S ribosomal subunits. Also involved in the hydrolysis of GTP during the formation of the 70S ribosomal complex. This is Translation initiation factor IF-2 from Haemophilus ducreyi (strain 35000HP / ATCC 700724).